Reading from the N-terminus, the 197-residue chain is Protein LURP-one-related 9 (197 aa).

It belongs to the LOR family.

Its function is as follows. Might be related to the phospholipid scramblase and tubby-like superfamily of membrane tethered transcription factors. The sequence is that of Protein LURP-one-related 9 from Arabidopsis thaliana (Mouse-ear cress).